The following is a 69-amino-acid chain: Fumarase D (69 aa).

Belongs to the FumD family.

The enzyme catalyses (S)-malate = fumarate + H2O. In terms of biological role, in vitro catalyzes the addition of water to fumarate, forming malate. Cannot catalyze the reverse reaction. Cannot use the cis-isomer maleate as substrate. The chain is Fumarase D from Shigella flexneri.